Here is a 228-residue protein sequence, read N- to C-terminus: Cytochrome c oxidase subunit 2 (228 aa).

Topologically, residues 1-26 (MSTWANLGLQDSASPLMEQLIFFHDH) are mitochondrial intermembrane. Residues 27–48 (ALLILVMITVLVGYLMFMLFFN) traverse the membrane as a helical segment. Over 49–62 (NYVNRFLLHGQLIE) the chain is Mitochondrial matrix. A helical transmembrane segment spans residues 63-82 (MIWTILPAIILLFIALPSLR). At 83–228 (LLYLLDEINE…FIKWISSNNS (146 aa)) the chain is on the mitochondrial intermembrane side. Cu cation is bound by residues histidine 161, cysteine 196, glutamate 198, cysteine 200, histidine 204, and methionine 207. Glutamate 198 provides a ligand contact to Mg(2+).

The protein belongs to the cytochrome c oxidase subunit 2 family. Component of the cytochrome c oxidase (complex IV, CIV), a multisubunit enzyme composed of a catalytic core of 3 subunits and several supernumerary subunits. The complex exists as a monomer or a dimer and forms supercomplexes (SCs) in the inner mitochondrial membrane with ubiquinol-cytochrome c oxidoreductase (cytochrome b-c1 complex, complex III, CIII). The cofactor is Cu cation.

Its subcellular location is the mitochondrion inner membrane. The catalysed reaction is 4 Fe(II)-[cytochrome c] + O2 + 8 H(+)(in) = 4 Fe(III)-[cytochrome c] + 2 H2O + 4 H(+)(out). Its function is as follows. Component of the cytochrome c oxidase, the last enzyme in the mitochondrial electron transport chain which drives oxidative phosphorylation. The respiratory chain contains 3 multisubunit complexes succinate dehydrogenase (complex II, CII), ubiquinol-cytochrome c oxidoreductase (cytochrome b-c1 complex, complex III, CIII) and cytochrome c oxidase (complex IV, CIV), that cooperate to transfer electrons derived from NADH and succinate to molecular oxygen, creating an electrochemical gradient over the inner membrane that drives transmembrane transport and the ATP synthase. Cytochrome c oxidase is the component of the respiratory chain that catalyzes the reduction of oxygen to water. Electrons originating from reduced cytochrome c in the intermembrane space (IMS) are transferred via the dinuclear copper A center (CU(A)) of subunit 2 and heme A of subunit 1 to the active site in subunit 1, a binuclear center (BNC) formed by heme A3 and copper B (CU(B)). The BNC reduces molecular oxygen to 2 water molecules using 4 electrons from cytochrome c in the IMS and 4 protons from the mitochondrial matrix. This is Cytochrome c oxidase subunit 2 (mt:CoII) from Drosophila melanogaster (Fruit fly).